An 83-amino-acid polypeptide reads, in one-letter code: Small ribosomal subunit protein uS15c (83 aa).

The protein belongs to the universal ribosomal protein uS15 family. Part of the 30S ribosomal subunit.

The protein localises to the plastid. The protein resides in the chloroplast. This is Small ribosomal subunit protein uS15c (rps15) from Fagopyrum esculentum subsp. ancestrale (Wild buckwheat).